A 1013-amino-acid chain; its full sequence is Sodium/potassium-transporting ATPase subunit alpha-3 (1013 aa).

A disordered region spans residues 1–24 (MGDKKDDKDSPKKNKGKERRDLDD). Residues 1-77 (MGDKKDDKDS…NALTPPPTTP (77 aa)) lie on the Cytoplasmic side of the membrane. Phosphoserine is present on residues Ser-37 and Ser-56. Positions 72–74 (PPP) are interaction with phosphoinositide-3 kinase. The chain crosses the membrane as a helical span at residues 78–98 (EWVKFCRQLFGGFSILLWIGA). Over 99 to 121 (ILCFLAYGIQAGTEDDPSGDNLY) the chain is Extracellular. Residues 122–142 (LGIVLAAVVIITGCFSYYQEA) form a helical membrane-spanning segment. Residues 143–278 (KSSKIMESFK…VGKTPIAIEI (136 aa)) lie on the Cytoplasmic side of the membrane. Phosphoserine is present on residues Ser-218 and Ser-265. The chain crosses the membrane as a helical span at residues 279–298 (EHFIQLITGVAVFLGVSFFI). The Extracellular portion of the chain corresponds to 299–310 (LSLILGYTWLEA). Residues 311–328 (VIFLIGIIVANVPEGLLA) form a helical membrane-spanning segment. Over 329–762 (TVTVCLTLTA…EEGRLIFDNL (434 aa)) the chain is Cytoplasmic. Catalysis depends on Asp-366, which acts as the 4-aspartylphosphate intermediate. Ser-442 is modified (phosphoserine). Tyr-548 carries the phosphotyrosine modification. Positions 707 and 711 each coordinate Mg(2+). A helical membrane pass occupies residues 763 to 782 (KKSIAYTLTSNIPEITPFLL). Over 783–792 (FIMANIPLPL) the chain is Extracellular. A helical membrane pass occupies residues 793-813 (GTITILCIDLGTDMVPAISLA). Residues 814 to 833 (YEAAESDIMKRQPRNPRTDK) lie on the Cytoplasmic side of the membrane. A helical membrane pass occupies residues 834–856 (LVNERLISMAYGQIGMIQALGGF). Residues 857–908 (FSYFVILAENGFLPGNLVGIRLNWDDRTVNDLEDSYGQQWTYEQRKVVEFTC) lie on the Extracellular side of the membrane. The helical transmembrane segment at 909 to 928 (HTAFFVSIVVVQWADLIICK) threads the bilayer. Topologically, residues 929-941 (TRRNSVFQQGMKN) are cytoplasmic. At Ser-933 the chain carries Phosphoserine; by PKA. The helical transmembrane segment at 942–960 (KILIFGLFEETALAAFLSY) threads the bilayer. Residues 961 to 975 (CPGMDVALRMYPLKP) are Extracellular-facing. A helical transmembrane segment spans residues 976 to 996 (SWWFCAFPYSFLIFVYDEIRK). The Cytoplasmic portion of the chain corresponds to 997–1013 (LILRRNPGGWVEKETYY).

Belongs to the cation transport ATPase (P-type) (TC 3.A.3) family. Type IIC subfamily. In terms of assembly, the sodium/potassium-transporting ATPase is composed of a catalytic alpha subunit, an auxiliary non-catalytic beta subunit and an additional regulatory subunit. Interacts with regulatory subunit FXYD1.

It is found in the cell membrane. The catalysed reaction is K(+)(out) + Na(+)(in) + ATP + H2O = K(+)(in) + Na(+)(out) + ADP + phosphate + H(+). In terms of biological role, this is the catalytic component of the active enzyme, which catalyzes the hydrolysis of ATP coupled with the exchange of sodium and potassium ions across the plasma membrane. This action creates the electrochemical gradient of sodium and potassium ions, providing the energy for active transport of various nutrients. The polypeptide is Sodium/potassium-transporting ATPase subunit alpha-3 (ATP1A3) (Homo sapiens (Human)).